A 327-amino-acid chain; its full sequence is Zinc transport protein ZntB (327 aa).

Over 1-273 (MEAIKGSDVN…ARRTYTMSLM (273 aa)) the chain is Cytoplasmic. A helical membrane pass occupies residues 274 to 294 (AMVFLPSTFLTGLFGVNLGGI). Residues 295-300 (PGGGWR) lie on the Periplasmic side of the membrane. A helical membrane pass occupies residues 301–321 (FGFSLFCILLVVLIGGVTLWL). Over 322–327 (HRSKWL) the chain is Cytoplasmic.

It belongs to the CorA metal ion transporter (MIT) (TC 1.A.35) family.

The protein resides in the cell inner membrane. The catalysed reaction is Zn(2+)(out) + H(+)(out) = Zn(2+)(in) + H(+)(in). Functionally, zinc transporter. Acts as a Zn(2+):proton symporter, which likely mediates zinc ion uptake. In Salmonella choleraesuis (strain SC-B67), this protein is Zinc transport protein ZntB.